The primary structure comprises 208 residues: Protein disulfide-isomerase A3 (208 aa).

Residues 1-44 enclose the Thioredoxin 1 domain; the sequence is RLAPEYEAAATRYGVSGYPTLKDGEEAGAYDGPRTADGIVSHLK. At K44 the chain carries N6-succinyllysine. K49 is modified (N6-acetyllysine). Residue T133 is modified to Phosphothreonine. In terms of domain architecture, Thioredoxin 2 spans 151–208; the sequence is SRFLQDYFDGNLKRYLKSEPIPETNDGPVKMDATANDVPSPYEVKGFPTIYFSPANKK. K163 carries the post-translational modification N6-acetyllysine.

Belongs to the protein disulfide isomerase family. Part of the major histocompatibility complex class I (MHC I) peptide loading complex composed of TAP1, TAP2, B2M, MHC heavy chain, TAPBP, PDIA3, and CALR. Interacts with ERP27 and CANX. Interacts with SERPINA2 and SERPINA1. Interacts with ATP2A2. Within the major histocompatibility complex class I (MHC I) peptide loading complex forms reversible disulfide-linked heterodimers with TAPBP as part of its protein folding chaperone activity. This is essential to assist the dynamic assembly of the MHC I complex with high affinity antigens in the endoplasmic reticulum. In terms of processing, phosphorylated. In the caput epididymal spermatozoa, detected in the mid-peice and at low levels in the principal piece. In the cauda epididymal spermatozoa, detected at very low levels in the principal piece and not in the mid-piece (at protein level).

The protein resides in the endoplasmic reticulum. It is found in the endoplasmic reticulum lumen. It localises to the melanosome. The enzyme catalyses Catalyzes the rearrangement of -S-S- bonds in proteins.. Its function is as follows. Protein disulfide isomerase that catalyzes the formation, isomerization, and reduction or oxidation of disulfide bonds in client proteins and functions as a protein folding chaperone. Core component of the major histocompatibility complex class I (MHC I) peptide loading complex where it functions as an essential folding chaperone for TAPBP. Through TAPBP, assists the dynamic assembly of the MHC I complex with high affinity antigens in the endoplasmic reticulum. Therefore, plays a crucial role in the presentation of antigens to cytotoxic T cells in adaptive immunity. In Mesocricetus auratus (Golden hamster), this protein is Protein disulfide-isomerase A3.